The chain runs to 295 residues: Mitochondrial dicarboxylate transporter (295 aa).

Solcar repeat units follow at residues 4–88 (KQVK…LKEH), 96–188 (TNMW…FKNF), and 198–286 (KKNS…LKKY). Helical transmembrane passes span 8–24 (YPWW…VMNT), 63–82 (GLSA…FGMY), 98–122 (MWYL…ADLI), 163–182 (GWKP…VVTY), 204–224 (LTSS…ADVI), and 262–280 (WVPS…FFAM).

The protein belongs to the mitochondrial carrier (TC 2.A.29) family. Homodimer.

It is found in the mitochondrion inner membrane. In terms of biological role, mitochondrial dicarboxylic transporter catalyzing the exchange of dicarboxylic acids like malate and succinate for inorganic phosphate. Required for growth on ethanol and acetate. This Candida glabrata (strain ATCC 2001 / BCRC 20586 / JCM 3761 / NBRC 0622 / NRRL Y-65 / CBS 138) (Yeast) protein is Mitochondrial dicarboxylate transporter (DIC1).